The chain runs to 364 residues: Long-wave-sensitive opsin 1 (364 aa).

Residues 1-52 (MAHAWGPQRLAGGQPQANFEESTQGSIFTYTNSNSTRDPFEGPNYHIAPRWV) lie on the Extracellular side of the membrane. A glycan (O-linked (GlcNAc) serine) is linked at Ser-22. Asn-34 carries an N-linked (GlcNAc...) asparagine glycan. The helical transmembrane segment at 53–77 (YHLTSAWMVFVVIASVFTNGLVLAA) threads the bilayer. At 78-89 (TMRFKKLRHPLN) the chain is on the cytoplasmic side. Residues 90-115 (WILVNLAIADLAETIIASTISVVNQM) form a helical membrane-spanning segment. At 116–129 (YGYFVLGHPLCVVE) the chain is on the extracellular side. An intrachain disulfide couples Cys-126 to Cys-203. The chain crosses the membrane as a helical span at residues 130-149 (GYTVSLCGITGLWSLAIISW). The Cytoplasmic portion of the chain corresponds to 150–168 (ERWMVVCKPFGNVRFDAKL). The helical transmembrane segment at 169-192 (AITGIAFSWIWAAVWTAPPIFGWS) threads the bilayer. At 193–218 (RYWPHGLKTSCGPDVFSGSSYPGVQS) the chain is on the extracellular side. Residues 219 to 246 (YMIVLMITCCFIPLSVIILCYLQVWLAI) form a helical membrane-spanning segment. The Cytoplasmic portion of the chain corresponds to 247-268 (RAVAKQQKESESTQKAEKEVTR). A helical transmembrane segment spans residues 269 to 292 (MVMVMIFAYCLCWGPYTFFACFAA). The Extracellular segment spans residues 293–300 (AHPGYAFH). Residues 301–325 (PLVAALPAYFAKSATIYNPIIYVFM) form a helical membrane-spanning segment. Lys-312 carries the post-translational modification N6-(retinylidene)lysine. The Cytoplasmic segment spans residues 326-364 (NRQFRNCILQLFGKKVDDSSELSSVSKTEASSVSSVSPA).

Belongs to the G-protein coupled receptor 1 family. Opsin subfamily. Post-translationally, phosphorylated on some or all of the serine and threonine residues present in the C-terminal region. Expressed in retina (at protein level). Expressed in cone and/or rod photoreceptor cells (at protein level).

Its subcellular location is the membrane. Its function is as follows. Visual pigments are the light-absorbing molecules that mediate vision. They consist of an apoprotein, opsin, covalently linked to cis-retinal. The protein is Long-wave-sensitive opsin 1 (OPN1LW) of Bos taurus (Bovine).